The sequence spans 463 residues: Succinate--CoA ligase [ADP-forming] subunit beta, mitochondrial (463 aa).

The N-terminal 53 residues, 1 to 53 (MAASVFYGRLLAVATLRNHRPRTALGAAAQVLGSSGLFNNHGLQVQQQQQRNL), are a transit peptide targeting the mitochondrion. An ATP-grasp domain is found at 61–288 (MELLQEAGVS…SNSAYRQKKI (228 aa)). Lysine 78 bears the N6-acetyllysine mark. Tyrosine 84 is subject to Phosphotyrosine. An N6-acetyllysine; alternate modification is found at lysine 88. Lysine 88 bears the N6-succinyllysine; alternate mark. ATP is bound by residues lysine 98 and 105–107 (GRG). 4 positions are modified to N6-acetyllysine: lysine 129, lysine 139, lysine 143, and lysine 216. Mg(2+)-binding residues include asparagine 258 and aspartate 272. The residue at position 279 (serine 279) is a Phosphoserine. Asparagine 323 lines the substrate pocket. Phosphothreonine is present on threonine 341. An N6-acetyllysine modification is found at lysine 368. Residue 380 to 382 (GIM) coordinates substrate.

Belongs to the succinate/malate CoA ligase beta subunit family. ATP-specific subunit beta subfamily. Heterodimer of an alpha and a beta subunit. The beta subunit determines specificity for ATP. Interacts with ALAS2. Mg(2+) is required as a cofactor.

The protein resides in the mitochondrion. The enzyme catalyses succinate + ATP + CoA = succinyl-CoA + ADP + phosphate. Its pathway is carbohydrate metabolism; tricarboxylic acid cycle; succinate from succinyl-CoA (ligase route): step 1/1. In terms of biological role, ATP-specific succinyl-CoA synthetase functions in the citric acid cycle (TCA), coupling the hydrolysis of succinyl-CoA to the synthesis of ATP and thus represents the only step of substrate-level phosphorylation in the TCA. The beta subunit provides nucleotide specificity of the enzyme and binds the substrate succinate, while the binding sites for coenzyme A and phosphate are found in the alpha subunit. The polypeptide is Succinate--CoA ligase [ADP-forming] subunit beta, mitochondrial (Macaca fascicularis (Crab-eating macaque)).